Here is a 423-residue protein sequence, read N- to C-terminus: Structure-specific endonuclease subunit SLX1 (423 aa).

The 83-residue stretch at 23–105 (AFYCCYLLRS…QNTKVSRHAD (83 aa)) folds into the GIY-YIG domain. 2 disordered regions span residues 300 to 334 (RRRRQAGTPKGQGLKSVRGRGRGRGHSEDESDALQ) and 365 to 406 (AHRP…LGLQ).

This sequence belongs to the SLX1 family. In terms of assembly, forms a heterodimer with SLX4. A divalent metal cation is required as a cofactor.

The protein localises to the nucleus. In terms of biological role, catalytic subunit of the SLX1-SLX4 structure-specific endonuclease that resolves DNA secondary structures generated during DNA repair and recombination. Has endonuclease activity towards branched DNA substrates, introducing single-strand cuts in duplex DNA close to junctions with ss-DNA. This is Structure-specific endonuclease subunit SLX1 from Paracoccidioides brasiliensis (strain Pb03).